The sequence spans 520 residues: Putative cytochrome P450 CYP13A3 (520 aa).

Cys-464 is a binding site for heme.

It belongs to the cytochrome P450 family. Heme serves as cofactor.

Functionally, cytochromes P450 are a group of heme-thiolate monooxygenases. They oxidize a variety of structurally unrelated compounds, including steroids, fatty acids, and xenobiotics. In Caenorhabditis elegans, this protein is Putative cytochrome P450 CYP13A3 (cyp-13A3).